Here is a 370-residue protein sequence, read N- to C-terminus: GTPase Obg (370 aa).

In terms of domain architecture, Obg spans 1–159 (MKFIDEARIE…RMVRLELKVL (159 aa)). Positions 127–147 (NLHFKSSTNRAPRQKTDGKPG) are disordered. The OBG-type G domain occupies 160–334 (ADVGLLGMPN…LCYAVYDYLA (175 aa)). GTP-binding positions include 166-173 (GMPNAGKS), 191-195 (FTTLA), 213-216 (DIPG), 284-287 (NKLD), and 315-317 (SAL). 2 residues coordinate Mg(2+): serine 173 and threonine 193.

Belongs to the TRAFAC class OBG-HflX-like GTPase superfamily. OBG GTPase family. As to quaternary structure, monomer. Mg(2+) serves as cofactor.

Its subcellular location is the cytoplasm. Its function is as follows. An essential GTPase which binds GTP, GDP and possibly (p)ppGpp with moderate affinity, with high nucleotide exchange rates and a fairly low GTP hydrolysis rate. Plays a role in control of the cell cycle, stress response, ribosome biogenesis and in those bacteria that undergo differentiation, in morphogenesis control. In Paraburkholderia phymatum (strain DSM 17167 / CIP 108236 / LMG 21445 / STM815) (Burkholderia phymatum), this protein is GTPase Obg.